The chain runs to 643 residues: Pescadillo homolog (643 aa).

Positions 305-323 (EKTKEKNHKSDNNPHEHTT) are enriched in basic and acidic residues. The tract at residues 305 to 329 (EKTKEKNHKSDNNPHEHTTNIDNNN) is disordered. Positions 378-474 (KLKELFKNHI…NILPCSDYLT (97 aa)) constitute a BRCT domain. Positions 531-615 (NYKEEEEEEN…IVLSKKKRKL (85 aa)) form a coiled coil.

Belongs to the pescadillo family. As to quaternary structure, interacts with dual specificity protein phosphatase YVH1.

Its subcellular location is the nucleus. The protein localises to the nucleolus. The protein resides in the nucleoplasm. Its function is as follows. Required for maturation of ribosomal RNAs and formation of the large ribosomal subunit. The sequence is that of Pescadillo homolog from Plasmodium falciparum (isolate 3D7).